The chain runs to 334 residues: Probable GTP 3',8-cyclase (334 aa).

Positions 24 to 256 constitute a Radical SAM core domain; the sequence is PYGRKVTGLR…RKKYIIDGVE (233 aa). Arg-33 contacts GTP. 2 residues coordinate [4Fe-4S] cluster: Cys-40 and Cys-44. Residue Tyr-46 participates in S-adenosyl-L-methionine binding. Cys-47 contacts [4Fe-4S] cluster. Lys-85 lines the GTP pocket. Gly-89 is an S-adenosyl-L-methionine binding site. Residue Thr-113 participates in GTP binding. Ser-137 contributes to the S-adenosyl-L-methionine binding site. Lys-176 serves as a coordination point for GTP. Cys-269 and Cys-272 together coordinate [4Fe-4S] cluster. A GTP-binding site is contributed by 274–276; sequence RLR. Position 286 (Cys-286) interacts with [4Fe-4S] cluster.

Belongs to the radical SAM superfamily. MoaA family. It depends on [4Fe-4S] cluster as a cofactor.

It catalyses the reaction GTP + AH2 + S-adenosyl-L-methionine = (8S)-3',8-cyclo-7,8-dihydroguanosine 5'-triphosphate + 5'-deoxyadenosine + L-methionine + A + H(+). It functions in the pathway cofactor biosynthesis; molybdopterin biosynthesis. Functionally, catalyzes the cyclization of GTP to (8S)-3',8-cyclo-7,8-dihydroguanosine 5'-triphosphate. This Methanosarcina acetivorans (strain ATCC 35395 / DSM 2834 / JCM 12185 / C2A) protein is Probable GTP 3',8-cyclase.